The following is a 182-amino-acid chain: Dynactin subunit 5 (182 aa).

Met-1 is modified (N-acetylmethionine).

The protein belongs to the dynactin subunits 5/6 family. Dynactin subunit 5 subfamily. As to quaternary structure, subunit of dynactin, a multiprotein complex part of a tripartite complex with dynein and a adapter, such as BICDL1, BICD2 or HOOK3. The dynactin complex is built around ACTR1A/ACTB filament and consists of an actin-related filament composed of a shoulder domain, a pointed end and a barbed end. Its length is defined by its flexible shoulder domain. The soulder is composed of 2 DCTN1 subunits, 4 DCTN2 and 2 DCTN3. The 4 DCNT2 (via N-terminus) bind the ACTR1A filament and act as molecular rulers to determine the length. The pointed end is important for binding dynein-dynactin cargo adapters. Consists of 4 subunits: ACTR10, DCNT4, DCTN5 and DCTN6. Within the complex DCTN6 forms a heterodimer with DCTN5. The barbed end is composed of a CAPZA1:CAPZB heterodimers, which binds ACTR1A/ACTB filament and dynactin and stabilizes dynactin. Interacts with N4BP2L1.

The protein localises to the cytoplasm. It is found in the cytoskeleton. Its subcellular location is the chromosome. It localises to the centromere. The protein resides in the kinetochore. Functionally, part of the dynactin complex that activates the molecular motor dynein for ultra-processive transport along microtubules. The sequence is that of Dynactin subunit 5 from Homo sapiens (Human).